The following is a 335-amino-acid chain: Lipase chaperone (335 aa).

Residues 1-21 (MSGSILLLPLAIALGLGFFIA) form a helical membrane-spanning segment.

It belongs to the lipase chaperone family.

The protein resides in the cell inner membrane. In terms of biological role, may be involved in the folding of the extracellular lipase during its passage through the periplasm. This Stutzerimonas stutzeri (strain A1501) (Pseudomonas stutzeri) protein is Lipase chaperone.